The chain runs to 487 residues: Serine/threonine-protein kinase 4 (487 aa).

M1 is subject to N-acetylmethionine. T3 bears the Phosphothreonine mark. One can recognise a Protein kinase domain in the interval 30 to 281; that stretch reads FDVLEKLGEG…ATQLLQHPFV (252 aa). ATP is bound by residues 36-44 and K59; that span reads LGEGSYGSV. The active-site Proton acceptor is the D149. Phosphothreonine; by autocatalysis is present on T183. S265 and S320 each carry phosphoserine. A coiled-coil region spans residues 289–327; it reads ILRDLINEAMDVKLKRQEAQQREVDQEEEENSEEDELDS. The segment at 305-332 is disordered; sequence QEAQQREVDQEEEENSEEDELDSGTMVR. A compositionally biased stretch (acidic residues) spans 313–326; sequence DQEEEENSEEDELD. Phosphothreonine occurs at positions 340 and 367. The residue at position 387 (T387) is a Phosphothreonine; by PKB/AKT1. 2 positions are modified to phosphoserine: S410 and S414. At Y433 the chain carries Phosphotyrosine. The SARAH domain occupies 433–480; the sequence is YEFLKSWTVEDLQKRLLALDPMMEQEIEEIRQKYQSKRQPILDAIEAK.

The protein belongs to the protein kinase superfamily. STE Ser/Thr protein kinase family. STE20 subfamily. Homodimer; mediated via the coiled-coil region. Interacts with NORE1, which inhibits autoactivation. Interacts with and stabilizes SAV1. Interacts with RASSF1. Interacts with FOXO3. Interacts with RASSF2 (via SARAH domain). Interacts with AR, PKB/AKT1, TNNI3 and SIRT1. Interacts with DLG5 (via PDZ domain 3). Interacts with MARK3 and SCRIB in the presence of DLG5. Requires Mg(2+) as cofactor. Post-translationally, autophosphorylated on serine and threonine residues. Phosphorylation at Thr-387 by PKB/AKT1, leads to inhibition of its: kinase activity, nuclear translocation and autophosphorylation at Thr-183. It also diminishes its cleavage by caspases and its ability to phosphorylate FOXO3. Proteolytically cleaved by caspase-3 during apoptosis at Asp-326 and Asp-349 resulting in a 37 kDa or a 39 kDa subunit respectively. The 39 kDa subunit is further cleaved into the 37 kDa form. Proteolytic cleavage results in kinase activation and nuclear translocation of the truncated form (MST1/N). It is less likely that cleavage at Asp-349 is a prerequisite for activation as this site is not conserved in the murine ortholog.

The protein localises to the cytoplasm. It localises to the nucleus. The catalysed reaction is L-seryl-[protein] + ATP = O-phospho-L-seryl-[protein] + ADP + H(+). It catalyses the reaction L-threonyl-[protein] + ATP = O-phospho-L-threonyl-[protein] + ADP + H(+). Its activity is regulated as follows. Inhibited by the C-terminal non-catalytic region. Activated by caspase-cleavage. Full activation also requires homodimerization and autophosphorylation of Thr-183. Activated by RASSF1 which acts by preventing its dephosphorylation. Functionally, stress-activated, pro-apoptotic kinase which, following caspase-cleavage, enters the nucleus and induces chromatin condensation followed by internucleosomal DNA fragmentation. Key component of the Hippo signaling pathway which plays a pivotal role in organ size control and tumor suppression by restricting proliferation and promoting apoptosis. The core of this pathway is composed of a kinase cascade wherein STK3/MST2 and STK4/MST1, in complex with its regulatory protein SAV1, phosphorylates and activates LATS1/2 in complex with its regulatory protein MOB1, which in turn phosphorylates and inactivates YAP1 oncoprotein and WWTR1/TAZ. Phosphorylation of YAP1 by LATS2 inhibits its translocation into the nucleus to regulate cellular genes important for cell proliferation, cell death, and cell migration. STK3/MST2 and STK4/MST1 are required to repress proliferation of mature hepatocytes, to prevent activation of facultative adult liver stem cells (oval cells), and to inhibit tumor formation. Phosphorylates 'Ser-14' of histone H2B (H2BS14ph) during apoptosis. Phosphorylates FOXO3 upon oxidative stress, which results in its nuclear translocation and cell death initiation. Phosphorylates MOBKL1A, MOBKL1B and RASSF2. Phosphorylates TNNI3 (cardiac Tn-I) and alters its binding affinity to TNNC1 (cardiac Tn-C) and TNNT2 (cardiac Tn-T). Phosphorylates FOXO1 on 'Ser-212' and regulates its activation and stimulates transcription of PMAIP1 in a FOXO1-dependent manner. Phosphorylates SIRT1 and inhibits SIRT1-mediated p53/TP53 deacetylation, thereby promoting p53/TP53 dependent transcription and apoptosis upon DNA damage. Acts as an inhibitor of PKB/AKT1. Phosphorylates AR on 'Ser-650' and suppresses its activity by intersecting with PKB/AKT1 signaling and antagonizing formation of AR-chromatin complexes. The chain is Serine/threonine-protein kinase 4 (STK4) from Bos taurus (Bovine).